A 469-amino-acid chain; its full sequence is Sulfate adenylyltransferase subunit 1 (469 aa).

A tr-type G domain is found at 22 to 236 (KDMLRFLTCG…TLENIEIGND (215 aa)). The segment at 31 to 38 (GSVDDGKS) is G1. GTP is bound at residue 31-38 (GSVDDGKS). The interval 89–93 (GITID) is G2. A G3 region spans residues 110–113 (DTPG). GTP is bound by residues 110–114 (DTPGH) and 165–168 (NKMD). Residues 165–168 (NKMD) form a G4 region. The G5 stretch occupies residues 202–204 (SAL).

The protein belongs to the TRAFAC class translation factor GTPase superfamily. Classic translation factor GTPase family. CysN/NodQ subfamily. As to quaternary structure, heterodimer composed of CysD, the smaller subunit, and CysN.

It catalyses the reaction sulfate + ATP + H(+) = adenosine 5'-phosphosulfate + diphosphate. It participates in sulfur metabolism; hydrogen sulfide biosynthesis; sulfite from sulfate: step 1/3. With CysD forms the ATP sulfurylase (ATPS) that catalyzes the adenylation of sulfate producing adenosine 5'-phosphosulfate (APS) and diphosphate, the first enzymatic step in sulfur assimilation pathway. APS synthesis involves the formation of a high-energy phosphoric-sulfuric acid anhydride bond driven by GTP hydrolysis by CysN coupled to ATP hydrolysis by CysD. The protein is Sulfate adenylyltransferase subunit 1 of Pseudoalteromonas atlantica (strain T6c / ATCC BAA-1087).